Consider the following 302-residue polypeptide: N-acetylmuramic acid 6-phosphate etherase (302 aa).

The SIS domain occupies 58–221; it reads IFERFKKGGR…TTTLMIKLGK (164 aa). Glu-86 acts as the Proton donor in catalysis. Glu-117 is an active-site residue.

Belongs to the GCKR-like family. MurNAc-6-P etherase subfamily. As to quaternary structure, homodimer.

It carries out the reaction N-acetyl-D-muramate 6-phosphate + H2O = N-acetyl-D-glucosamine 6-phosphate + (R)-lactate. Its pathway is amino-sugar metabolism; N-acetylmuramate degradation. Its function is as follows. Specifically catalyzes the cleavage of the D-lactyl ether substituent of MurNAc 6-phosphate, producing GlcNAc 6-phosphate and D-lactate. This Mycoplasma mycoides subsp. mycoides SC (strain CCUG 32753 / NCTC 10114 / PG1) protein is N-acetylmuramic acid 6-phosphate etherase.